A 249-amino-acid polypeptide reads, in one-letter code: DNA polymerase sliding clamp (249 aa).

The protein belongs to the PCNA family. As to quaternary structure, homotrimer. The subunits circularize to form a toroid; DNA passes through its center. Replication factor C (RFC) is required to load the toroid on the DNA.

Its function is as follows. Sliding clamp subunit that acts as a moving platform for DNA processing. Responsible for tethering the catalytic subunit of DNA polymerase and other proteins to DNA during high-speed replication. The chain is DNA polymerase sliding clamp from Nanoarchaeum equitans (strain Kin4-M).